A 508-amino-acid chain; its full sequence is Photosystem II CP47 reaction center protein (508 aa).

The next 6 membrane-spanning stretches (helical) occupy residues 21–36 (SVHL…WAGS), 101–115 (IVLS…IWHW), 140–156 (GIHL…FGAF), 203–218 (IAAG…FHLT), 237–252 (VLSS…AFVV), and 457–472 (CFAL…HGAR).

It belongs to the PsbB/PsbC family. PsbB subfamily. In terms of assembly, PSII is composed of 1 copy each of membrane proteins PsbA, PsbB, PsbC, PsbD, PsbE, PsbF, PsbH, PsbI, PsbJ, PsbK, PsbL, PsbM, PsbT, PsbX, PsbY, PsbZ, Psb30/Ycf12, at least 3 peripheral proteins of the oxygen-evolving complex and a large number of cofactors. It forms dimeric complexes. The cofactor is Binds multiple chlorophylls. PSII binds additional chlorophylls, carotenoids and specific lipids..

The protein localises to the plastid. It is found in the chloroplast thylakoid membrane. Its function is as follows. One of the components of the core complex of photosystem II (PSII). It binds chlorophyll and helps catalyze the primary light-induced photochemical processes of PSII. PSII is a light-driven water:plastoquinone oxidoreductase, using light energy to abstract electrons from H(2)O, generating O(2) and a proton gradient subsequently used for ATP formation. This chain is Photosystem II CP47 reaction center protein, found in Chlorokybus atmophyticus (Soil alga).